The following is a 710-amino-acid chain: Putative transmembrane protein ORF710 (710 aa).

An N-terminal signal peptide occupies residues Met1–Ser33. Transmembrane regions (helical) follow at residues Val41–Leu61, Tyr76–Tyr95, and Val689–Ile709.

It is found in the host membrane. This Acidianus convivator (ATV) protein is Putative transmembrane protein ORF710.